The sequence spans 329 residues: Sex comb on midleg-like protein 1 (329 aa).

S138 and S238 each carry phosphoserine. The segment at 138-157 (SPTLPVSRRENNSPSNLPRP) is disordered. The SAM domain occupies 258 to 325 (WSVEAVVLFL…YYIDRLKQGK (68 aa)).

This sequence belongs to the SCM family. Ubiquitous. Expressed in fetal and adult tissues.

The protein resides in the nucleus. Functionally, putative Polycomb group (PcG) protein. PcG proteins act by forming multiprotein complexes, which are required to maintain the transcriptionally repressive state of homeotic genes throughout development. May be involved in spermatogenesis during sexual maturation. This is Sex comb on midleg-like protein 1 (SCML1) from Homo sapiens (Human).